A 146-amino-acid chain; its full sequence is Snaclec coagulation factor IX/factor X-binding protein subunit B2 (146 aa).

The N-terminal stretch at 1 to 23 is a signal peptide; the sequence is MGRLIFVSFGLLVVFLSLSGTAA. 3 disulfide bridges follow: cysteine 25–cysteine 36, cysteine 53–cysteine 142, and cysteine 119–cysteine 134. One can recognise a C-type lectin domain in the interval 32–143; sequence YEGHCYKPFN…CRMMANFVCE (112 aa).

The protein belongs to the snaclec family. Heterodimer of subunits A and B2; disulfide-linked. Expressed by the venom gland.

The protein localises to the secreted. Its function is as follows. Anticoagulant protein which binds to the gamma-carboxyglutamic acid-domain regions of factors IX (F9) and factor X (F10) in the presence of calcium with a 1 to 1 stoichiometry. The chain is Snaclec coagulation factor IX/factor X-binding protein subunit B2 from Trimeresurus stejnegeri (Chinese green tree viper).